A 178-amino-acid polypeptide reads, in one-letter code: ATP synthase subunit delta (178 aa).

This sequence belongs to the ATPase delta chain family. F-type ATPases have 2 components, F(1) - the catalytic core - and F(0) - the membrane proton channel. F(1) has five subunits: alpha(3), beta(3), gamma(1), delta(1), epsilon(1). F(0) has three main subunits: a(1), b(2) and c(10-14). The alpha and beta chains form an alternating ring which encloses part of the gamma chain. F(1) is attached to F(0) by a central stalk formed by the gamma and epsilon chains, while a peripheral stalk is formed by the delta and b chains.

Its subcellular location is the cell inner membrane. In terms of biological role, f(1)F(0) ATP synthase produces ATP from ADP in the presence of a proton or sodium gradient. F-type ATPases consist of two structural domains, F(1) containing the extramembraneous catalytic core and F(0) containing the membrane proton channel, linked together by a central stalk and a peripheral stalk. During catalysis, ATP synthesis in the catalytic domain of F(1) is coupled via a rotary mechanism of the central stalk subunits to proton translocation. Functionally, this protein is part of the stalk that links CF(0) to CF(1). It either transmits conformational changes from CF(0) to CF(1) or is implicated in proton conduction. The protein is ATP synthase subunit delta of Pseudomonas syringae pv. tomato (strain ATCC BAA-871 / DC3000).